We begin with the raw amino-acid sequence, 513 residues long: Protein CYCLOPS (513 aa).

The segment at 327-435 (QIHGGTASGE…ERSRKMAEAK (109 aa)) is disordered. Residues 334 to 347 (SGEPSQSESSAAAP) are compositionally biased toward low complexity. Residues 359–381 (PSNSSQTLCDSSWKQVGESTQNR) show a composition bias toward polar residues. A compositionally biased stretch (basic and acidic residues) spans 384 to 396 (GVREQIMDNLKDD). Short sequence motifs (nuclear localization signal) lie at residues 397–401 (RKRKR) and 421–424 (KKRR). A coiled-coil region spans residues 447-513 (MQAVMKRCEN…ERLLSETGKI (67 aa)).

The protein belongs to the CYCLOPS family.

It localises to the nucleus. Involved symbiotic signaling. Required for root infection by symbiotic rhizobia, infection thread (IT) formation, and nodule development. Required for symbiosome formation (i.e. the release of the bacteria from the ITs) and subsequent symbiosome development. Involved in arbuscular mycorrhizal (AM) symbiosis. In Pisum sativum (Garden pea), this protein is Protein CYCLOPS.